The following is a 210-amino-acid chain: Probable GTP-binding protein EngB (210 aa).

Positions 29–203 constitute an EngB-type G domain; it reads NGIEIAFAGR…SNKLDSWFAP (175 aa). GTP contacts are provided by residues 37-44, 64-68, 82-85, 149-152, and 181-184; these read GRSNAGKS, GRTQL, DLPG, TKAD, and IYSA. Positions 44 and 66 each coordinate Mg(2+).

The protein belongs to the TRAFAC class TrmE-Era-EngA-EngB-Septin-like GTPase superfamily. EngB GTPase family. The cofactor is Mg(2+).

Functionally, necessary for normal cell division and for the maintenance of normal septation. This chain is Probable GTP-binding protein EngB, found in Haemophilus ducreyi (strain 35000HP / ATCC 700724).